An 89-amino-acid polypeptide reads, in one-letter code: Small ribosomal subunit protein uS15 (89 aa).

This sequence belongs to the universal ribosomal protein uS15 family. Part of the 30S ribosomal subunit. Forms a bridge to the 50S subunit in the 70S ribosome, contacting the 23S rRNA.

One of the primary rRNA binding proteins, it binds directly to 16S rRNA where it helps nucleate assembly of the platform of the 30S subunit by binding and bridging several RNA helices of the 16S rRNA. Functionally, forms an intersubunit bridge (bridge B4) with the 23S rRNA of the 50S subunit in the ribosome. In Thermosynechococcus vestitus (strain NIES-2133 / IAM M-273 / BP-1), this protein is Small ribosomal subunit protein uS15.